The sequence spans 349 residues: Quinolinate synthase (349 aa).

2 residues coordinate iminosuccinate: His52 and Ser69. A [4Fe-4S] cluster-binding site is contributed by Cys114. Residues 140-142 and Ser157 contribute to the iminosuccinate site; that span reads YVN. Residue Cys201 coordinates [4Fe-4S] cluster. Iminosuccinate is bound by residues 227 to 229 and Thr255; that span reads HPE. Residue Cys300 participates in [4Fe-4S] cluster binding.

Belongs to the quinolinate synthase family. Type 2 subfamily. It depends on [4Fe-4S] cluster as a cofactor.

Its subcellular location is the cytoplasm. The catalysed reaction is iminosuccinate + dihydroxyacetone phosphate = quinolinate + phosphate + 2 H2O + H(+). The protein operates within cofactor biosynthesis; NAD(+) biosynthesis; quinolinate from iminoaspartate: step 1/1. Functionally, catalyzes the condensation of iminoaspartate with dihydroxyacetone phosphate to form quinolinate. This Mycobacterium bovis (strain BCG / Tokyo 172 / ATCC 35737 / TMC 1019) protein is Quinolinate synthase.